The primary structure comprises 409 residues: Pectin acetylesterase 4 (409 aa).

Positions 1-32 are cleaved as a signal peptide; the sequence is MVIRSLLQCRTWSKSDWLLASIGIVLIVYSFS. Residues N36 and N163 are each glycosylated (N-linked (GlcNAc...) asparagine). Residues S199, D295, and H362 each act as charge relay system in the active site. N-linked (GlcNAc...) asparagine glycans are attached at residues N379 and N406.

This sequence belongs to the pectinacetylesterase family.

It localises to the secreted. Its subcellular location is the cell wall. In terms of biological role, hydrolyzes acetyl esters in homogalacturonan regions of pectin. In type I primary cell wall, galacturonic acid residues of pectin can be acetylated at the O-2 and O-3 positions. Decreasing the degree of acetylation of pectin gels in vitro alters their physical properties. The polypeptide is Pectin acetylesterase 4 (Arabidopsis thaliana (Mouse-ear cress)).